The following is a 261-amino-acid chain: Guanine nucleotide exchange factor BopE (261 aa).

The protein belongs to the GEF (guanine exchange factor) SopE family. In terms of assembly, monomer. Interacts with human CDC42.

It localises to the secreted. Activator for both CDC42 and RAC1 by directly interacting with these Rho GTPases and acting as a guanine nucleotide exchange factor (GEF). This activation results in actin cytoskeleton rearrangements and stimulates membrane ruffling, thus promoting bacterial entry into non-phagocytic cells. This Burkholderia mallei (strain NCTC 10247) protein is Guanine nucleotide exchange factor BopE (bopE).